The chain runs to 157 residues: Nicotinate dehydrogenase subunit A (157 aa).

The 2Fe-2S ferredoxin-type domain maps to 3-79; that stretch reads TTISLQVNGQ…GRNITTLEGL (77 aa). 4 residues coordinate [2Fe-2S] cluster: C41, C46, C49, and C61.

[2Fe-2S] cluster serves as cofactor.

It carries out the reaction 2 Fe(III)-[cytochrome] + nicotinate + H2O = 2 Fe(II)-[cytochrome] + 6-hydroxynicotinate + 2 H(+). It participates in cofactor degradation; nicotinate degradation. Functionally, subunit of the two-component enzyme NicAB that mediates nicotinate hydroxylation, the first step in the aerobic nicotinate degradation pathway. Mediates conversion of nicotinate into 6-hydroxynicotinate (6HNA). The chain is Nicotinate dehydrogenase subunit A (nicA) from Pseudomonas putida (strain ATCC 47054 / DSM 6125 / CFBP 8728 / NCIMB 11950 / KT2440).